The following is a 303-amino-acid chain: UDP-3-O-acyl-N-acetylglucosamine deacetylase (303 aa).

His78, His237, and Asp241 together coordinate Zn(2+). The Proton donor role is filled by His264.

This sequence belongs to the LpxC family. Requires Zn(2+) as cofactor.

It carries out the reaction a UDP-3-O-[(3R)-3-hydroxyacyl]-N-acetyl-alpha-D-glucosamine + H2O = a UDP-3-O-[(3R)-3-hydroxyacyl]-alpha-D-glucosamine + acetate. It functions in the pathway glycolipid biosynthesis; lipid IV(A) biosynthesis; lipid IV(A) from (3R)-3-hydroxytetradecanoyl-[acyl-carrier-protein] and UDP-N-acetyl-alpha-D-glucosamine: step 2/6. Its function is as follows. Catalyzes the hydrolysis of UDP-3-O-myristoyl-N-acetylglucosamine to form UDP-3-O-myristoylglucosamine and acetate, the committed step in lipid A biosynthesis. The sequence is that of UDP-3-O-acyl-N-acetylglucosamine deacetylase from Cellvibrio japonicus (strain Ueda107) (Pseudomonas fluorescens subsp. cellulosa).